The following is a 712-amino-acid chain: Phosphoribosylformylglycinamidine synthase subunit PurL (712 aa).

H32 is an active-site residue. Y35 contacts ATP. E76 provides a ligand contact to Mg(2+). Residues 77 to 80 (SHNH) and R99 each bind substrate. H78 acts as the Proton acceptor in catalysis. D100 lines the Mg(2+) pocket. Q223 is a substrate binding site. Position 251 (D251) interacts with Mg(2+). A substrate-binding site is contributed by 295 to 297 (ESQ). The ATP site is built by D470 and G507. N508 is a binding site for Mg(2+). Substrate is bound at residue S510.

It belongs to the FGAMS family. Monomer. Part of the FGAM synthase complex composed of 1 PurL, 1 PurQ and 2 PurS subunits.

Its subcellular location is the cytoplasm. It catalyses the reaction N(2)-formyl-N(1)-(5-phospho-beta-D-ribosyl)glycinamide + L-glutamine + ATP + H2O = 2-formamido-N(1)-(5-O-phospho-beta-D-ribosyl)acetamidine + L-glutamate + ADP + phosphate + H(+). Its pathway is purine metabolism; IMP biosynthesis via de novo pathway; 5-amino-1-(5-phospho-D-ribosyl)imidazole from N(2)-formyl-N(1)-(5-phospho-D-ribosyl)glycinamide: step 1/2. Its function is as follows. Part of the phosphoribosylformylglycinamidine synthase complex involved in the purines biosynthetic pathway. Catalyzes the ATP-dependent conversion of formylglycinamide ribonucleotide (FGAR) and glutamine to yield formylglycinamidine ribonucleotide (FGAM) and glutamate. The FGAM synthase complex is composed of three subunits. PurQ produces an ammonia molecule by converting glutamine to glutamate. PurL transfers the ammonia molecule to FGAR to form FGAM in an ATP-dependent manner. PurS interacts with PurQ and PurL and is thought to assist in the transfer of the ammonia molecule from PurQ to PurL. In Thermococcus gammatolerans (strain DSM 15229 / JCM 11827 / EJ3), this protein is Phosphoribosylformylglycinamidine synthase subunit PurL.